Here is a 354-residue protein sequence, read N- to C-terminus: Cysteine and histidine-rich domain-containing protein morgana (354 aa).

Zn(2+) contacts are provided by C4, C9, C23, H26, C41, C42, C58, H63, C140, C145, C159, H162, C177, C178, C194, and H199. CHORD domains lie at 4–63 (CYNR…LAKH) and 140–199 (CKNN…YGEH). Residues 210-301 (VVQCRYDWHQ…LEPGSWSNLN (92 aa)) enclose the CS domain. S324 and S339 each carry phosphoserine.

In terms of assembly, interacts with Hsp83.

It localises to the cytoplasm. Its subcellular location is the nucleus. It is found in the cytoskeleton. The protein localises to the spindle. Functionally, regulates centrosome duplication and mitotic spindle dynamics. Also involved in controlling the size of dendritic arbors. May act as co-chaperone for Hsp83. During mitotic spindle assembly, regulates microtubule (MT) dynamics by binding to MTs and promoting MT polymerisation. Promotes the elongation and retraction of terminal branches in response to changes in body size, possibly acting downstream of the TORC2 pathway to enable proportional scaling of dendritic arbors. The protein is Cysteine and histidine-rich domain-containing protein morgana of Drosophila melanogaster (Fruit fly).